A 28-amino-acid polypeptide reads, in one-letter code: Short cationic peptide-1a (28 aa).

Glutamate 28 is subject to Glutamic acid 1-amide.

As to expression, expressed by the venom gland.

It is found in the secreted. The sequence is that of Short cationic peptide-1a from Cupiennius salei (American wandering spider).